The primary structure comprises 91 residues: Sec-independent protein translocase protein TatA (91 aa).

A helical transmembrane segment spans residues 1–21 (MGIFDWKHWIVILIVVVLVFG). Residues 42–91 (AMHDDDKPAEQPAPQPQQAQPAPQGSPLNQPHTIDAQAHKVDEPIRKDQV) form a disordered region. Over residues 51–64 (EQPAPQPQQAQPAP) the composition is skewed to low complexity. The span at 78-91 (QAHKVDEPIRKDQV) shows a compositional bias: basic and acidic residues.

Belongs to the TatA/E family. The Tat system comprises two distinct complexes: a TatABC complex, containing multiple copies of TatA, TatB and TatC subunits, and a separate TatA complex, containing only TatA subunits. Substrates initially bind to the TatABC complex, which probably triggers association of the separate TatA complex to form the active translocon.

It is found in the cell inner membrane. Its function is as follows. Part of the twin-arginine translocation (Tat) system that transports large folded proteins containing a characteristic twin-arginine motif in their signal peptide across membranes. TatA could form the protein-conducting channel of the Tat system. The polypeptide is Sec-independent protein translocase protein TatA (Pseudomonas syringae pv. tomato (strain ATCC BAA-871 / DC3000)).